The chain runs to 232 residues: Large ribosomal subunit protein uL1 (232 aa).

The protein belongs to the universal ribosomal protein uL1 family. In terms of assembly, part of the 50S ribosomal subunit.

Functionally, binds directly to 23S rRNA. The L1 stalk is quite mobile in the ribosome, and is involved in E site tRNA release. Its function is as follows. Protein L1 is also a translational repressor protein, it controls the translation of the L11 operon by binding to its mRNA. The sequence is that of Large ribosomal subunit protein uL1 from Phocaeicola vulgatus (strain ATCC 8482 / DSM 1447 / JCM 5826 / CCUG 4940 / NBRC 14291 / NCTC 11154) (Bacteroides vulgatus).